Reading from the N-terminus, the 420-residue chain is MGMTITEKILAAHAGKASVEPGELIQAKLDLVLANDVTAPVSIKELEKASLDAVFDKERVVLVQDHFVPAKDIKSAEQSKIVRDFARKHDITHHYDVGDMGIEHCLLPEKGLVVPGDAVIGADSHTCTYGALGAFATGVGSTDLAAGIALGEAWFKVPEAIKFEYEGKLPEDVTGKDLILHTIGDIGVDGALYQSMEFTGSAIDDLSMDGRMTMCNMAIEAGGKNGIIAPDKKTIAYVEERATRPYKVYTSDPDAKYARVIKYDVEKLEPVVAFPHLPENTRPVSEAGHVEIDQVVIGSCTNGRIEDLRMAAKILQGKKVHKNVRCIIFPGTQAIYKQAIKEGLIDIFIDAGAAVSTPTCGPCLGGHMGILAKGERALATTNRNFVGRMGHPESEVYLCGPNVAAASAIAGRIVHPREVE.

The [4Fe-4S] cluster site is built by C300, C360, and C363.

Belongs to the aconitase/IPM isomerase family. LeuC type 2 subfamily. As to quaternary structure, heterodimer of LeuC and LeuD. Requires [4Fe-4S] cluster as cofactor.

The catalysed reaction is (2R,3S)-3-isopropylmalate = (2S)-2-isopropylmalate. The protein operates within amino-acid biosynthesis; L-leucine biosynthesis; L-leucine from 3-methyl-2-oxobutanoate: step 2/4. In terms of biological role, catalyzes the isomerization between 2-isopropylmalate and 3-isopropylmalate, via the formation of 2-isopropylmaleate. The polypeptide is 3-isopropylmalate dehydratase large subunit (Heliobacterium modesticaldum (strain ATCC 51547 / Ice1)).